We begin with the raw amino-acid sequence, 162 residues long: Caveolin-2 (162 aa).

The Cytoplasmic portion of the chain corresponds to 1–86; it reads MGLETEKADV…FEISKYVMYK (86 aa). A Phosphotyrosine; by SRC modification is found at Y19. Phosphoserine occurs at positions 20 and 23. A Phosphotyrosine; by SRC modification is found at Y27. S36 is modified (phosphoserine). Residues 87 to 107 constitute an intramembrane region (helical); that stretch reads FLTVFLSIPLAFLAGILFATL. Residues 108-162 are Cytoplasmic-facing; that stretch reads SCLHIWIIMPFVKTCLMVLPSVQTIWKSVTDAIIAPLCTSIGRSFSSVSLQLSHD.

This sequence belongs to the caveolin family. In terms of assembly, monomer or homodimer. Interacts with CAV1; the interaction forms a stable heterooligomeric complex that is required for targeting to lipid rafts and for caveolae formation. Tyrosine phosphorylated forms do not form heterooligomers with the Tyr-19-phosphorylated form existing as a monomer or dimer, and the Tyr-27-form as a monomer only. Interacts (tyrosine phosphorylated form) with the SH2 domain-containing proteins, RASA1, NCK1 and SRC. Interacts (tyrosine phosphorylated form) with INSR, the interaction (Tyr-27-phosphorylated form) is increased on insulin stimulation. Interacts (Tyr-19 phosphorylated form) with MAPK1 (phosphorylated form); the interaction, promoted by insulin, leads to nuclear location and MAPK1 activation. Interacts with STAT3; the interaction is increased on insulin-induced tyrosine phosphorylation leading to STAT activation. Phosphorylated on serine and tyrosine residues. CAV1 promotes phosphorylation on Ser-23 which then targets the complex to the plasma membrane, lipid rafts and caveolae. Phosphorylation on Ser-36 appears to modulate mitosis in endothelial cells. Phosphorylation on both Tyr-19 and Tyr-27 is required for insulin-induced 'Ser-727' phosphorylation of STAT3 and its activation. Phosphorylation on Tyr-19 is required for insulin-induced phosphorylation of MAPK1 and DNA binding of STAT3. Tyrosine phosphorylation is induced by both EGF and insulin (By. similarity).

The protein resides in the nucleus. The protein localises to the cytoplasm. Its subcellular location is the golgi apparatus membrane. It localises to the cell membrane. It is found in the membrane. The protein resides in the caveola. Functionally, may act as a scaffolding protein within caveolar membranes. Interacts directly with G-protein alpha subunits and can functionally regulate their activity. Acts as an accessory protein in conjunction with CAV1 in targeting to lipid rafts and driving caveolae formation. The Ser-36 phosphorylated form has a role in modulating mitosis in endothelial cells. Positive regulator of cellular mitogenesis of the MAPK signaling pathway. Required for the insulin-stimulated nuclear translocation and activation of MAPK1 and STAT3, and the subsequent regulation of cell cycle progression. In Saimiri boliviensis boliviensis (Bolivian squirrel monkey), this protein is Caveolin-2 (CAV2).